The following is a 1413-amino-acid chain: DNA-directed RNA polymerase subunit beta' (1413 aa).

Zn(2+)-binding residues include Cys70, Cys72, Cys85, and Cys88. Positions 461, 463, and 465 each coordinate Mg(2+). Cys820, Cys894, Cys901, and Cys904 together coordinate Zn(2+).

Belongs to the RNA polymerase beta' chain family. The RNAP catalytic core consists of 2 alpha, 1 beta, 1 beta' and 1 omega subunit. When a sigma factor is associated with the core the holoenzyme is formed, which can initiate transcription. It depends on Mg(2+) as a cofactor. Zn(2+) is required as a cofactor.

The enzyme catalyses RNA(n) + a ribonucleoside 5'-triphosphate = RNA(n+1) + diphosphate. In terms of biological role, DNA-dependent RNA polymerase catalyzes the transcription of DNA into RNA using the four ribonucleoside triphosphates as substrates. This is DNA-directed RNA polymerase subunit beta' from Cupriavidus metallidurans (strain ATCC 43123 / DSM 2839 / NBRC 102507 / CH34) (Ralstonia metallidurans).